A 252-amino-acid chain; its full sequence is Flagellar brake protein YcgR (252 aa).

The region spanning 123 to 238 is the PilZ domain; the sequence is QRREFYRVPT…TLATVQKYIT (116 aa).

The protein belongs to the YcgR family. In terms of assembly, monomer. Interacts with the flagellar basal bodies.

The protein resides in the bacterial flagellum basal body. In terms of biological role, acts as a flagellar brake, regulating swimming and swarming in a bis-(3'-5') cyclic diguanylic acid (c-di-GMP)-dependent manner. Binds 1 c-di-GMP dimer per subunit. Increasing levels of c-di-GMP lead to decreased motility. The sequence is that of Flagellar brake protein YcgR from Janthinobacterium sp. (strain Marseille) (Minibacterium massiliensis).